The chain runs to 523 residues: ATP-dependent RNA helicase DBP3 (523 aa).

Residues 1-21 (MTKEEIADKKRKVVDEEVIEK) are compositionally biased toward basic and acidic residues. The interval 1–71 (MTKEEIADKK…SEKKPEPTSA (71 aa)) is disordered. Residues 22-48 (KKSKKHKKDKKDKKEKKDKKHKKHKKE) show a composition bias toward basic residues. A compositionally biased stretch (basic and acidic residues) spans 49–67 (KKGEKEVEVPEKESEKKPE). The Q motif signature appears at 114–140 (LSFDYLSLDSSIQAEISKFPKPTPIQA). Residues 143-315 (WPYLLSGKDV…STFMNNPIKV (173 aa)) form the Helicase ATP-binding domain. 156-163 (AETGSGKT) contributes to the ATP binding site. A DEAD box motif is present at residues 262–265 (DEAD). In terms of domain architecture, Helicase C-terminal spans 344–493 (KLLELLKKYH…PVPEDLIKFG (150 aa)).

The protein belongs to the DEAD box helicase family. DDX5/DBP2 subfamily.

It localises to the nucleus. The protein resides in the nucleolus. The enzyme catalyses ATP + H2O = ADP + phosphate + H(+). ATP-dependent RNA helicase required for 60S ribosomal subunit synthesis. Involved in efficient pre-rRNA processing, predominantly at site A3, which is necessary for the normal formation of 25S and 5.8S rRNAs. This is ATP-dependent RNA helicase DBP3 (DBP3) from Saccharomyces cerevisiae (strain ATCC 204508 / S288c) (Baker's yeast).